Here is a 258-residue protein sequence, read N- to C-terminus: Probable S-methyl-5'-thioinosine phosphorylase (258 aa).

53 to 54 (RH) serves as a coordination point for phosphate. Residue Met180 participates in substrate binding. Thr181 provides a ligand contact to phosphate. 204–206 (NQA) provides a ligand contact to substrate.

It belongs to the PNP/MTAP phosphorylase family. MTAP subfamily. As to quaternary structure, homotrimer.

The enzyme catalyses S-methyl-5'-thioinosine + phosphate = 5-(methylsulfanyl)-alpha-D-ribose 1-phosphate + hypoxanthine. It participates in purine metabolism; purine nucleoside salvage. Its function is as follows. Catalyzes the reversible phosphorylation of S-methyl-5'-thioinosine (MTI) to hypoxanthine and 5-methylthioribose-1-phosphate. Involved in the breakdown of S-methyl-5'-thioadenosine (MTA), a major by-product of polyamine biosynthesis. Catabolism of (MTA) occurs via deamination to MTI and phosphorolysis to hypoxanthine. The protein is Probable S-methyl-5'-thioinosine phosphorylase of Methanosarcina acetivorans (strain ATCC 35395 / DSM 2834 / JCM 12185 / C2A).